A 165-amino-acid polypeptide reads, in one-letter code: Ubiquitin-conjugating enzyme E2 G2 (165 aa).

N-acetylalanine is present on A2. The 161-residue stretch at 4-164 folds into the UBC core domain; it reads TALKRLMAEY…AKQIVQKSLG (161 aa). The Glycyl thioester intermediate role is filled by C89.

The protein belongs to the ubiquitin-conjugating enzyme family. In terms of assembly, interacts with AUP1 (via C-terminus); the interaction recruits UBE2G2 to lipid droplets. Interacts with ubiquitin ligases AMFR/gp78 and RNF139/TRC8; recruitment to lipid droplets by AUP1 facilitates interaction of UBE2G2 with AMFR and RNF139, leading to sterol-induced ubiquitination of 3-hydroxy-3-methylglutaryl coenzyme A reductase and its subsequent proteasomal degradation.

The protein localises to the endoplasmic reticulum. Its subcellular location is the lipid droplet. It carries out the reaction S-ubiquitinyl-[E1 ubiquitin-activating enzyme]-L-cysteine + [E2 ubiquitin-conjugating enzyme]-L-cysteine = [E1 ubiquitin-activating enzyme]-L-cysteine + S-ubiquitinyl-[E2 ubiquitin-conjugating enzyme]-L-cysteine.. Its pathway is protein modification; protein ubiquitination. In terms of biological role, accepts ubiquitin from the E1 complex and catalyzes its covalent attachment to other proteins. In vitro catalyzes 'Lys-48'-linked polyubiquitination. Involved in endoplasmic reticulum-associated degradation (ERAD). Required for sterol-induced ubiquitination of 3-hydroxy-3-methylglutaryl coenzyme A reductase and its subsequent proteasomal degradation. This is Ubiquitin-conjugating enzyme E2 G2 from Homo sapiens (Human).